The chain runs to 316 residues: Lipoyl synthase (316 aa).

The [4Fe-4S] cluster site is built by Cys-60, Cys-65, Cys-71, Cys-86, Cys-90, Cys-93, and Ser-297. Residues Trp-72–Thr-286 enclose the Radical SAM core domain.

The protein belongs to the radical SAM superfamily. Lipoyl synthase family. [4Fe-4S] cluster serves as cofactor.

The protein localises to the cytoplasm. It carries out the reaction [[Fe-S] cluster scaffold protein carrying a second [4Fe-4S](2+) cluster] + N(6)-octanoyl-L-lysyl-[protein] + 2 oxidized [2Fe-2S]-[ferredoxin] + 2 S-adenosyl-L-methionine + 4 H(+) = [[Fe-S] cluster scaffold protein] + N(6)-[(R)-dihydrolipoyl]-L-lysyl-[protein] + 4 Fe(3+) + 2 hydrogen sulfide + 2 5'-deoxyadenosine + 2 L-methionine + 2 reduced [2Fe-2S]-[ferredoxin]. Its pathway is protein modification; protein lipoylation via endogenous pathway; protein N(6)-(lipoyl)lysine from octanoyl-[acyl-carrier-protein]: step 2/2. Catalyzes the radical-mediated insertion of two sulfur atoms into the C-6 and C-8 positions of the octanoyl moiety bound to the lipoyl domains of lipoate-dependent enzymes, thereby converting the octanoylated domains into lipoylated derivatives. In Nocardioides sp. (strain ATCC BAA-499 / JS614), this protein is Lipoyl synthase.